The chain runs to 203 residues: uncharacterized protein (203 aa).

Residues 90-188 (EKRQHVRVQP…YENIIGRYVM (99 aa)) form the PilZ domain.

It to A.aeolicus aq_820 and aq_1583.

This is an uncharacterized protein from Aquifex aeolicus (strain VF5).